We begin with the raw amino-acid sequence, 224 residues long: Large ribosomal subunit protein uL3 (224 aa).

The tract at residues 132-153 is disordered; it reads SQTKTHGTHEYQRHPGAIGQRK.

It belongs to the universal ribosomal protein uL3 family. As to quaternary structure, part of the 50S ribosomal subunit. Forms a cluster with proteins L14 and L19.

Functionally, one of the primary rRNA binding proteins, it binds directly near the 3'-end of the 23S rRNA, where it nucleates assembly of the 50S subunit. This Myxococcus xanthus (strain DK1622) protein is Large ribosomal subunit protein uL3.